A 476-amino-acid chain; its full sequence is VGYITQIIGPVLDVAPSPGKMPNIYNSLIVKGRNPAGQDINVTCEVQQLLGNNEVRAVXMSATDGLMRGMGAVDTGAPLSVPVGEITPGRISNVLGEPVDNLGPVESSTTFPIHRSAPAFTQLDTKLSIFETGIKVVDLLAPYRRGGKIGLFGGAGVGKTVLIMELINNIAKAHGGVSVSGGVGERTREGNDLYMETKESKVINEQNLSESKVALVYGQMNEPPGARMRVGSTAPTMAEYFRDVNKQDVLLFIDNIFRFVQAGSEVSALSGRMPSAVGYQPTLGTEMGCLQERITSTKEGSITSIQAVYVPADDLTDPAPATTFAHLDATTVLSRGLAAKGIYPAVDPLDSTSTMLQPWIVGEEHYETAQGVKQTLQRYKEPQDIIAIPGLDELSEEDRLTVARARKIERFLSQPFLVAEVFTGSPGKYVSLLETIKGFQMILPGELDNLPEQAFYLVGNIDEATAKAATLQVEGQ.

153-160 (GGAGVGKT) provides a ligand contact to ATP.

The protein belongs to the ATPase alpha/beta chains family. In terms of assembly, F-type ATPases have 2 components, CF(1) - the catalytic core - and CF(0) - the membrane proton channel. CF(1) has five subunits: alpha(3), beta(3), gamma(1), delta(1), epsilon(1). CF(0) has four main subunits: a(1), b(1), b'(1) and c(9-12).

The protein resides in the plastid. Its subcellular location is the chloroplast thylakoid membrane. It catalyses the reaction ATP + H2O + 4 H(+)(in) = ADP + phosphate + 5 H(+)(out). Produces ATP from ADP in the presence of a proton gradient across the membrane. The catalytic sites are hosted primarily by the beta subunits. The protein is ATP synthase subunit beta, chloroplastic of Dicksonia antarctica (Australian tree fern).